The following is a 741-amino-acid chain: Nuclear pore complex protein Nup88 (741 aa).

Alanine 2 carries the post-translational modification N-acetylalanine. Residues serine 35, serine 50, serine 379, serine 437, serine 442, and serine 517 each carry the phosphoserine modification. A Phosphothreonine modification is found at threonine 525. Phosphoserine is present on serine 540. A coiled-coil region spans residues 585–651; sequence EEIQRRVKLL…KLLHSFHSEL (67 aa). At serine 698 the chain carries Phosphoserine.

Interacts with NUP214/CAN. Interacts with NUP62 and NUP98. In terms of tissue distribution, ubiquitous.

The protein localises to the nucleus. It is found in the nuclear pore complex. Functionally, component of nuclear pore complex. This is Nuclear pore complex protein Nup88 (NUP88) from Homo sapiens (Human).